The chain runs to 196 residues: Protein kinase OspG (196 aa).

The protein belongs to the protein kinase superfamily. In terms of processing, autophosphorylated.

It localises to the secreted. It is found in the host cell. Effector proteins function to alter host cell physiology and promote bacterial survival in host tissues. This protein is a kinase that is involved in down-regulation of the host innate response induced by invasive bacteria. The polypeptide is Protein kinase OspG (ospG) (Shigella flexneri serotype X (strain 2002017)).